A 215-amino-acid chain; its full sequence is Heart- and neural crest derivatives-expressed protein 1 (215 aa).

Disordered regions lie at residues 53-109 (APDF…RTES) and 166-198 (LKKA…EKRI). Over residues 65–89 (AAAAATAYGPDARPGQSPGRLEALG) the composition is skewed to low complexity. The segment covering 92–104 (LGRRKGSGPKKER) has biased composition (basic residues). One can recognise a bHLH domain in the interval 94–146 (RRKGSGPKKERRRTESINSAFAELRECIPNVPADTKLSKIKTLRLATSYIAYL). T107 carries the post-translational modification Phosphothreonine; by PLK4. Phosphoserine; by PLK4 is present on S109.

As to quaternary structure, efficient DNA binding requires dimerization with another bHLH protein. Forms homodimers and heterodimers with TCF3 gene products E12 and E47, HAND2 and HEY1, HEY2 and HEYL (hairy-related transcription factors). Interacts with MDFIC. Interacts with SOX15; the interaction enhances HAND1-induced differentiation of trophoblast giant cells. In terms of processing, phosphorylation by PLK4 disrupts the interaction with MDFIC and leads to translocation into the nucleoplasm, allowing dimerization and transcription factor activity. As to expression, heart.

Its subcellular location is the nucleus. The protein resides in the nucleoplasm. It is found in the nucleolus. Its function is as follows. Transcription factor that plays an essential role in both trophoblast giant cell differentiation and in cardiac morphogenesis. Binds the DNA sequence 5'-NRTCTG-3' (non-canonical E-box). Acts as a transcriptional repressor of SOX15. In the adult, could be required for ongoing expression of cardiac-specific genes. The polypeptide is Heart- and neural crest derivatives-expressed protein 1 (HAND1) (Homo sapiens (Human)).